A 357-amino-acid polypeptide reads, in one-letter code: Holliday junction branch migration complex subunit RuvB (357 aa).

The segment covering 1 to 15 (MAIQSDSLSSLPDSP) has biased composition (low complexity). A disordered region spans residues 1 to 30 (MAIQSDSLSSLPDSPRIVAPQPVSPNEESI). The tract at residues 13 to 195 (DSPRIVAPQP…FGIVSRLEFY (183 aa)) is large ATPase domain (RuvB-L). ATP-binding positions include Leu34, Arg35, Gly76, Lys79, Thr80, Thr81, 142 to 144 (EDF), Arg185, Tyr195, and Arg232. Residue Thr80 coordinates Mg(2+). The tract at residues 196–266 (NTDELARIVT…AAGRALAMLD (71 aa)) is small ATPAse domain (RuvB-S). The tract at residues 269-357 (PQGLDVMDRK…SGGTGELFSK (89 aa)) is head domain (RuvB-H). DNA-binding residues include Arg305, Arg324, and Arg329.

It belongs to the RuvB family. As to quaternary structure, homohexamer. Forms an RuvA(8)-RuvB(12)-Holliday junction (HJ) complex. HJ DNA is sandwiched between 2 RuvA tetramers; dsDNA enters through RuvA and exits via RuvB. An RuvB hexamer assembles on each DNA strand where it exits the tetramer. Each RuvB hexamer is contacted by two RuvA subunits (via domain III) on 2 adjacent RuvB subunits; this complex drives branch migration. In the full resolvosome a probable DNA-RuvA(4)-RuvB(12)-RuvC(2) complex forms which resolves the HJ.

Its subcellular location is the cytoplasm. The catalysed reaction is ATP + H2O = ADP + phosphate + H(+). In terms of biological role, the RuvA-RuvB-RuvC complex processes Holliday junction (HJ) DNA during genetic recombination and DNA repair, while the RuvA-RuvB complex plays an important role in the rescue of blocked DNA replication forks via replication fork reversal (RFR). RuvA specifically binds to HJ cruciform DNA, conferring on it an open structure. The RuvB hexamer acts as an ATP-dependent pump, pulling dsDNA into and through the RuvAB complex. RuvB forms 2 homohexamers on either side of HJ DNA bound by 1 or 2 RuvA tetramers; 4 subunits per hexamer contact DNA at a time. Coordinated motions by a converter formed by DNA-disengaged RuvB subunits stimulates ATP hydrolysis and nucleotide exchange. Immobilization of the converter enables RuvB to convert the ATP-contained energy into a lever motion, pulling 2 nucleotides of DNA out of the RuvA tetramer per ATP hydrolyzed, thus driving DNA branch migration. The RuvB motors rotate together with the DNA substrate, which together with the progressing nucleotide cycle form the mechanistic basis for DNA recombination by continuous HJ branch migration. Branch migration allows RuvC to scan DNA until it finds its consensus sequence, where it cleaves and resolves cruciform DNA. The protein is Holliday junction branch migration complex subunit RuvB of Bordetella parapertussis (strain 12822 / ATCC BAA-587 / NCTC 13253).